The sequence spans 149 residues: Macrodomain Ter protein (149 aa).

This sequence belongs to the MatP family. Homodimer.

It localises to the cytoplasm. Its function is as follows. Required for spatial organization of the terminus region of the chromosome (Ter macrodomain) during the cell cycle. Prevents early segregation of duplicated Ter macrodomains during cell division. Binds specifically to matS, which is a 13 bp signature motif repeated within the Ter macrodomain. This chain is Macrodomain Ter protein, found in Vibrio vulnificus (strain YJ016).